Consider the following 1094-residue polypeptide: Centrosomal protein of 128 kDa (1094 aa).

The tract at residues 1-29 (MAESSSESDHFRCRDRLSPWAARSTHRGT) is disordered. Basic and acidic residues predominate over residues 7-17 (ESDHFRCRDRL). At Ser31 the chain carries Phosphoserine. Residues 115–140 (DGGTGSELHHFPPTSPLKDYGDPQGI) form a disordered region. Coiled-coil stretches lie at residues 190-827 (SRSD…QESI) and 879-959 (EELK…IALE). 3 positions are modified to phosphoserine: Ser249, Ser291, and Ser331. The tract at residues 319 to 345 (AEGDRKGLQHQVSQISKQQSNYQDEQG) is disordered. Over residues 328–342 (HQVSQISKQQSNYQD) the composition is skewed to polar residues. The segment covering 987-999 (DSCSSSERTDGRY) has biased composition (basic and acidic residues). The segment at 987-1018 (DSCSSSERTDGRYSKYRVRRNSLQHHQDDTKY) is disordered. The segment covering 1000-1009 (SKYRVRRNSL) has biased composition (basic residues). Ser1061 is modified (phosphoserine). Residues 1067–1094 (VAPDSASNKEDATMNGTSSQPKKEEYGS) form a disordered region.

Its subcellular location is the cytoplasm. The protein resides in the cytoskeleton. It is found in the microtubule organizing center. It localises to the centrosome. The protein localises to the centriole. Its subcellular location is the spindle pole. In Homo sapiens (Human), this protein is Centrosomal protein of 128 kDa (CEP128).